Consider the following 460-residue polypeptide: Antizyme inhibitor 2 (460 aa).

The interval 117–140 (QIAQIKYAAKHGIQLLSFDNEMEL) is necessary for polyamine uptake stimulation.

It belongs to the Orn/Lys/Arg decarboxylase class-II family. ODC antizyme inhibitor subfamily. Monomer. Interacts with OAZ1, OAZ2 and OAZ3; this interaction disrupts the interaction between the antizyme and ODC1. Does not form a heterodimer with ODC1. Post-translationally, ubiquitinated, leading to its proteasomal degradation; a process that is reduced in presence of antizymes. May also be degraded through the lysosomal degradative pathway in a proteasomal-independent manner. In terms of tissue distribution, expressed in the neocortex, thalamus, hippocampus, cerebellum, medulla oblongata, gray and white matter. Expressed in neurons, oligodendrocytes, basket, Purkinje and pyramidal cells. Expressed in spermatocytes and Leydig cells of the testis. Expressed in luteal theca cells lining corpus luteum cysts and in hilus cells of the ovary. Expressed in primary and neoplastic mast cells (MC) (at protein level). Highly expressed in brain. Also expressed in testis.

The protein resides in the nucleus. It localises to the cytoplasm. It is found in the perinuclear region. Its subcellular location is the membrane. The protein localises to the cytoplasmic vesicle. The protein resides in the endoplasmic reticulum-Golgi intermediate compartment. It localises to the golgi apparatus. It is found in the cis-Golgi network. Its subcellular location is the trans-Golgi network. The protein localises to the cytoplasmic granule. The protein resides in the cell projection. It localises to the axon. It is found in the dendrite. Its subcellular location is the perikaryon. Its function is as follows. Antizyme inhibitor (AZI) protein that positively regulates ornithine decarboxylase (ODC) activity and polyamine uptake. AZI is an enzymatically inactive ODC homolog that counteracts the negative effect of ODC antizymes (AZs) OAZ1, OAZ2 and OAZ3 on ODC activity by competing with ODC for antizyme-binding. Inhibits antizyme-dependent ODC degradation and releases ODC monomers from their inactive complex with antizymes, leading to formation of the catalytically active ODC homodimer and restoring polyamine production. Participates in the morphological integrity of the trans-Golgi network (TGN) and functions as a regulator of intracellular secretory vesicle trafficking. This Homo sapiens (Human) protein is Antizyme inhibitor 2 (AZIN2).